The following is a 282-amino-acid chain: N-methyltransferase gliN (282 aa).

Belongs to the methyltransferase superfamily. LaeA methyltransferase family.

The protein operates within mycotoxin biosynthesis. In terms of biological role, N-methyltransferase; part of the gene cluster that mediates the biosynthesis of gliotoxin, a member of the epipolythiodioxopiperazine (ETP) class of toxins characterized by a disulfide bridged cyclic dipeptide. The first step in gliotoxin biosynthesis is the condensation of serine and phenylalanine to form the cyclo-L-phenylalanyl-L-serine diketopiperazine (DKP) by the NRPS gliP. GliP is also able to produce the DKP cyclo-L-tryptophanyl-L-serine, suggesting that the substrate specificity of the first adenylation (A) domain in gliP is sufficiently relaxed to accommodate both L-Phe and L-Trp. The cytochrome P450 monooxygenase gliC has been shown to catalyze the subsequent hydroxylation of the alpha-carbon of L-Phe in cyclo-L-phenylalanyl-L-serine whereas the second cytochrome P450 enzyme, gliF, is presumably involved in the modification of the DKP side chain. The glutathione S-transferase (GST) gliG then forms a bis-glutathionylated biosynthetic intermediate which is responsible for the sulfurization of gliotoxin. This bis-glutathionylated intermediate is subsequently processed by the gamma-glutamyl cyclotransferase gliK to remove both gamma-glutamyl moieties. Subsequent processing via gliI yields a biosynthetic intermediate, which is N-methylated via the N-methyltransferase gliN, before the gliotoxin oxidoreductase gliT-mediated disulfide bridge closure. GliN-mediated amide methylation confers stability to ETP, damping the spontaneous formation of tri- and tetrasulfides. Intracellular dithiol gliotoxin oxidized by gliT is subsequently effluxed by gliA. Gliotoxin contributes to pathogenesis during invasive aspergillosis. In macrophages and neutrophils, gliotoxin showed inhibition of various different cell functions including cytokine production, antigen presentation, phagocytosis, and production of reactive oxygen species. The chain is N-methyltransferase gliN from Aspergillus fumigatus (strain ATCC MYA-4609 / CBS 101355 / FGSC A1100 / Af293) (Neosartorya fumigata).